The primary structure comprises 885 residues: Leucine--tRNA ligase (885 aa).

The 'HIGH' region signature appears at 48 to 58 (PYPSGKLHMGH). The 'KMSKS' region signature appears at 639–643 (TMSKS). K642 provides a ligand contact to ATP.

The protein belongs to the class-I aminoacyl-tRNA synthetase family.

The protein resides in the cytoplasm. It catalyses the reaction tRNA(Leu) + L-leucine + ATP = L-leucyl-tRNA(Leu) + AMP + diphosphate. This Bordetella bronchiseptica (strain ATCC BAA-588 / NCTC 13252 / RB50) (Alcaligenes bronchisepticus) protein is Leucine--tRNA ligase.